The following is a 434-amino-acid chain: MTDVLPTTPTASGVTDRPLSEVDPEIAAVLDAELGRQRDTLEMIASENFAPRSVLEAQGSVLTNKYAEGYPGKRYYGGCEHVDVAEELARTRAKELFGAEHANVQPHSGASANAAAMHAFIRGGDGILGLELAHGGHLTHGMKINFSGRMYDVSSYGVDPQTFRVDMDVVRAVALESRPKLIIAGWSAYPRQLDFAAFRSIADEVGAHLMVDMAHFAGLVAAGLHPSPVPHAHVVTSTVHKTLAGPRSGLILTRQEFAKKIDSAVFPGQQGGPLMHVVAAKAVAFKVAGSEEFAERQRRTLEGAKIVAERLTAPDVAEAGVSVLTGGTDVHLVLVDLRDSKLDGQQAEDRLHEVGITVNRNAVPFDPRPPMVTSGLRIGTPALATRGFGAAEFTEVADVIALALKPEFDADALRARVAKLTAEFPLYPSAGSFA.

(6S)-5,6,7,8-tetrahydrofolate contacts are provided by residues leucine 132 and glycine 136–leucine 138. The residue at position 241 (lysine 241) is an N6-(pyridoxal phosphate)lysine.

It belongs to the SHMT family. As to quaternary structure, homodimer. Pyridoxal 5'-phosphate serves as cofactor.

It localises to the cytoplasm. The enzyme catalyses (6R)-5,10-methylene-5,6,7,8-tetrahydrofolate + glycine + H2O = (6S)-5,6,7,8-tetrahydrofolate + L-serine. It participates in one-carbon metabolism; tetrahydrofolate interconversion. It functions in the pathway amino-acid biosynthesis; glycine biosynthesis; glycine from L-serine: step 1/1. Its function is as follows. Catalyzes the reversible interconversion of serine and glycine with tetrahydrofolate (THF) serving as the one-carbon carrier. This reaction serves as the major source of one-carbon groups required for the biosynthesis of purines, thymidylate, methionine, and other important biomolecules. Also exhibits THF-independent aldolase activity toward beta-hydroxyamino acids, producing glycine and aldehydes, via a retro-aldol mechanism. The protein is Serine hydroxymethyltransferase of Kineococcus radiotolerans (strain ATCC BAA-149 / DSM 14245 / SRS30216).